Reading from the N-terminus, the 404-residue chain is Inner membrane transport protein YdiM (404 aa).

Over 1–5 (MKNPY) the chain is Periplasmic. Residues 6–26 (FPTALGLYFNYLVHGMGVLLM) form a helical membrane-spanning segment. At 27-43 (SLNMASLETLWQTNAAG) the chain is on the cytoplasmic side. The chain crosses the membrane as a helical span at residues 44-64 (VSIVISSLGIGRLSVLLFAGL). Over 65-84 (LSDRFGRRPFIMLGMCCYMA) the chain is Periplasmic. Residues 85–105 (FFFGILQTNNIIIAYVFGFLA) traverse the membrane as a helical segment. Over 106-132 (GMANSFLDAGTYPSLMEAFPRSPGTAN) the chain is Cytoplasmic. Residues 133–153 (ILIKAFVSSGQFLLPLIISLL) form a helical membrane-spanning segment. Residues 154–157 (VWAE) lie on the Periplasmic side of the membrane. The helical transmembrane segment at 158–178 (LWFGWSFMIAAGIMFINALFL) threads the bilayer. Over 179 to 206 (YRCTFPPHPGRRLPVIKKTTSSTEHRCS) the chain is Cytoplasmic. A helical membrane pass occupies residues 207-227 (IIDLASYTLYGYISMATFYLV). The Periplasmic segment spans residues 228–246 (SQWLAQYGQFVAGMSYTMS). The helical transmembrane segment at 247 to 267 (IKLLSIYTVGSLLCVFITAPL) threads the bilayer. Over 268 to 273 (IRNTVR) the chain is Cytoplasmic. A helical membrane pass occupies residues 274–294 (PTTLLMLYTFISFIALFTVCL). Residues 295–296 (HP) are Periplasmic-facing. The chain crosses the membrane as a helical span at residues 297-317 (TFYVVIIFAFVIGFTSAGGVV). Residues 318-336 (QIGLTLMAERFPYAKGKAT) lie on the Cytoplasmic side of the membrane. A helical transmembrane segment spans residues 337 to 357 (GIYYSAGSIATFTIPLITAHL). Topologically, residues 358 to 364 (SQRSIAD) are periplasmic. A helical transmembrane segment spans residues 365–385 (IMWFDTAIAAIGFLLALFIGL). Residues 386 to 404 (RSRKKTRHHSLKENVAPGG) are Cytoplasmic-facing.

Belongs to the major facilitator superfamily.

The protein resides in the cell inner membrane. This chain is Inner membrane transport protein YdiM (ydiM), found in Escherichia coli (strain K12).